The chain runs to 488 residues: MKGVLLDESVLFSPESEDSSPSLRESVPSLLRLLRYSMIRTGISYGLDLPENKVDLLRKTAAEYSINCLPLETSLTSVTFGDTLKAWYSDGSILYVASSRKEEILRELSPSQLVVLLDVEGDSLEDPNIIHIHSLEELPMTICCINKKAMGDGAAIVAYIMKPSRVEDFAKRGALPMYPTSCGLIFLPLMFEFPLASQLKHADIIFHKATDEILSIELNCSDSKSSVAVTFSTGMEKLKKYMEDQNACAIVDPIRNIYPVVDRLKMQHILLGLEGLGAAGRKIRGACFLKIDSYDEPDLAQNLSRAGLSLPCIVKPQVACGVADAHSMAIVFRVEDFKNLNTPVPAIIQEYVDHSSRIFKFYVLGETIFHAVKKSIPSSSSLRKSAEENGLKPILFDSLKSLPVDSANQNPVSEIDLELVTEAATWLRKKLDLTIFGFDVVIQEGTGDHVIVDLNYLPSFKEVPDNIAVPAFWEAIRNRFDQHVQEKH.

1D-myo-inositol 1,3,4-trisphosphate contacts are provided by lysine 208 and lysine 224. The 243-residue stretch at asparagine 246–histidine 488 folds into the ATP-grasp domain. 2 residues coordinate ATP: arginine 263 and lysine 315. Histidine 326 and lysine 360 together coordinate 1D-myo-inositol 1,3,4-trisphosphate. Residues glutamine 349 to lysine 360, serine 375, and serine 398 each bind ATP. Residues aspartate 439, aspartate 453, and asparagine 455 each coordinate Mg(2+). Positions 455 and 459 each coordinate 1D-myo-inositol 1,3,4-trisphosphate.

Belongs to the ITPK1 family. As to quaternary structure, monomer. It depends on Mg(2+) as a cofactor. Expressed in roots, leaf vasculature, cauline leaves, flower buds and siliques.

The enzyme catalyses 1D-myo-inositol 1,3,4-trisphosphate + ATP = 1D-myo-inositol 1,3,4,5-tetrakisphosphate + ADP + H(+). It catalyses the reaction 1D-myo-inositol 1,3,4-trisphosphate + ATP = 1D-myo-inositol 1,3,4,6-tetrakisphosphate + ADP + H(+). Its function is as follows. Kinase that can phosphorylate the inositol polyphosphate Ins(1,3,4)P3 to form InsP4. Also phosphorylates a racemic mixture of Ins(1,4,6)P3 and Ins(3,4,6)P3 to form InsP4. Does not display inositol 3,4,5,6-tetrakisphosphate 1-kinase activity, but possesses inositol 1,4,5,6-tetrakisphosphate and inositol 1,3,4,5-tetrakisphosphate isomerase activity. Ins(1,3,4,6)P4 is an essential molecule in the hexakisphosphate (InsP6) pathway. The protein is Inositol 1,3,4-trisphosphate 5/6-kinase 4 (ITPK4) of Arabidopsis thaliana (Mouse-ear cress).